The primary structure comprises 479 residues: Serine palmitoyltransferase 1 (479 aa).

At 1–16 the chain is on the lumenal side; that stretch reads MFLFDIYNNILYYTKE. A helical membrane pass occupies residues 17-37; it reads FIVTSTSPNLFIHGLMAVFII. At 38–479 the chain is on the cytoplasmic side; that stretch reads YLLTKRPFKP…KCTSFVLESN (442 aa).

This sequence belongs to the class-II pyridoxal-phosphate-dependent aminotransferase family. In terms of assembly, forms a heterodimer with sptB. Pyridoxal 5'-phosphate serves as cofactor.

The protein localises to the endoplasmic reticulum membrane. It carries out the reaction L-serine + hexadecanoyl-CoA + H(+) = 3-oxosphinganine + CO2 + CoA. The protein operates within lipid metabolism; sphingolipid metabolism. Component of serine palmitoyltransferase (SPT), which catalyzes the committed step in the synthesis of sphingolipids, the condensation of serine with palmitoyl CoA to form the long chain base 3-ketosphinganine. The sequence is that of Serine palmitoyltransferase 1 (sptA) from Dictyostelium discoideum (Social amoeba).